A 475-amino-acid polypeptide reads, in one-letter code: Chromosomal replication initiator protein DnaA (475 aa).

A domain I, interacts with DnaA modulators region spans residues 1–73; the sequence is MTNSEQERWS…LSCWQAEMPE (73 aa). The domain II stretch occupies residues 73–131; the sequence is EVHRIDLSVRTAMRCATPAKEAPVAVEARRAERGDAKPADTRAPVMTPVAASHDALGGS. The segment at 132-354 is domain III, AAA+ region; it reads PLDPRLTFAS…GAINRLLAHS (223 aa). Residues G179, G181, K182, and T183 each coordinate ATP. The tract at residues 355 to 475 is domain IV, binds dsDNA; the sequence is KLNNQPVTLD…VEALKRQLQD (121 aa).

Belongs to the DnaA family. In terms of assembly, oligomerizes as a right-handed, spiral filament on DNA at oriC.

The protein resides in the cytoplasm. Plays an essential role in the initiation and regulation of chromosomal replication. ATP-DnaA binds to the origin of replication (oriC) to initiate formation of the DNA replication initiation complex once per cell cycle. Binds the DnaA box (a 9 base pair repeat at the origin) and separates the double-stranded (ds)DNA. Forms a right-handed helical filament on oriC DNA; dsDNA binds to the exterior of the filament while single-stranded (ss)DNA is stabiized in the filament's interior. The ATP-DnaA-oriC complex binds and stabilizes one strand of the AT-rich DNA unwinding element (DUE), permitting loading of DNA polymerase. After initiation quickly degrades to an ADP-DnaA complex that is not apt for DNA replication. Binds acidic phospholipids. The sequence is that of Chromosomal replication initiator protein DnaA from Bradyrhizobium sp. (strain BTAi1 / ATCC BAA-1182).